The sequence spans 389 residues: 3-ketoacyl-CoA thiolase (389 aa).

The active-site Acyl-thioester intermediate is the C91. Residues H343 and C373 each act as proton acceptor in the active site.

It belongs to the thiolase-like superfamily. Thiolase family. In terms of assembly, heterotetramer of two alpha chains (FadB) and two beta chains (FadA).

Its subcellular location is the cytoplasm. The catalysed reaction is an acyl-CoA + acetyl-CoA = a 3-oxoacyl-CoA + CoA. It participates in lipid metabolism; fatty acid beta-oxidation. Catalyzes the final step of fatty acid oxidation in which acetyl-CoA is released and the CoA ester of a fatty acid two carbons shorter is formed. In Citrobacter koseri (strain ATCC BAA-895 / CDC 4225-83 / SGSC4696), this protein is 3-ketoacyl-CoA thiolase.